The following is a 417-amino-acid chain: NADH-quinone oxidoreductase subunit D (417 aa).

The protein belongs to the complex I 49 kDa subunit family. In terms of assembly, NDH-1 is composed of 14 different subunits. Subunits NuoB, C, D, E, F, and G constitute the peripheral sector of the complex.

It localises to the cell inner membrane. The enzyme catalyses a quinone + NADH + 5 H(+)(in) = a quinol + NAD(+) + 4 H(+)(out). Its function is as follows. NDH-1 shuttles electrons from NADH, via FMN and iron-sulfur (Fe-S) centers, to quinones in the respiratory chain. The immediate electron acceptor for the enzyme in this species is believed to be ubiquinone. Couples the redox reaction to proton translocation (for every two electrons transferred, four hydrogen ions are translocated across the cytoplasmic membrane), and thus conserves the redox energy in a proton gradient. This chain is NADH-quinone oxidoreductase subunit D, found in Nitrosospira multiformis (strain ATCC 25196 / NCIMB 11849 / C 71).